The following is a 163-amino-acid chain: Inorganic pyrophosphatase (163 aa).

Glutamate 9 is a Mg(2+) binding site. Substrate is bound by residues lysine 17, arginine 31, and tyrosine 43. 4 residues coordinate Mg(2+): aspartate 53, aspartate 58, aspartate 85, and aspartate 90. The Proton acceptor role is filled by aspartate 90. Tyrosine 127 contacts substrate.

It belongs to the PPase family. As to quaternary structure, homohexamer. It depends on Mg(2+) as a cofactor.

It localises to the cytoplasm. It carries out the reaction diphosphate + H2O = 2 phosphate + H(+). Functionally, catalyzes the hydrolysis of inorganic pyrophosphate (PPi) forming two phosphate ions. The polypeptide is Inorganic pyrophosphatase (Leifsonia xyli subsp. xyli (strain CTCB07)).